Reading from the N-terminus, the 214-residue chain is Membrane-spanning 4-domains subfamily A member 3 (214 aa).

The disordered stretch occupies residues 1–31 (MASHEVDNAELGSASAHGTPGSEAGPEELNT). The Cytoplasmic portion of the chain corresponds to 1-49 (MASHEVDNAELGSASAHGTPGSEAGPEELNTSVYQPIDGSPDYQKAKLQ). The chain crosses the membrane as a helical span at residues 50–70 (VLGAIQILNAAMILALGVFLG). Residues 71-81 (SLQYPYHFQKH) are Extracellular-facing. A helical membrane pass occupies residues 82 to 102 (FFFFTFYTGYPIWGAVFFCSS). Residues 103-124 (GTLSVVAGIKPTRTWIQNSFGM) lie on the Cytoplasmic side of the membrane. A helical transmembrane segment spans residues 125-145 (NIASATIALVGTAFLSLNIAV). Topologically, residues 146–175 (NIQSLRSCHSSSESPDLCNYMGSISNGMVS) are extracellular. A helical membrane pass occupies residues 176–196 (LLLILTLLELCVTISTIAMWC). Topologically, residues 197–214 (NANCCNSREEISSPPNSV) are cytoplasmic.

Belongs to the MS4A family. As to quaternary structure, interacts with CDKN3. Interacts with CDKN3-CDK2 complexes through its binding to CDKN3; this interaction facilitates dissociation of cyclin A from CDKN3-CDK2 complexes. Expressed specifically in hematopoietic cells and tissues.

The protein localises to the endomembrane system. The protein resides in the cytoplasm. It is found in the perinuclear region. Hematopoietic modulator for the G1-S cell cycle transition. Modulates the level of phosphorylation of cyclin-dependent kinase 2 (CDK2) through its direct binding to cyclin-dependent kinase inhibitor 3 (CDKN3/KAP). This chain is Membrane-spanning 4-domains subfamily A member 3 (MS4A3), found in Homo sapiens (Human).